We begin with the raw amino-acid sequence, 198 residues long: Recombination protein RecR (198 aa).

The segment at 57–72 (CSVCGHITENDPCYIC) adopts a C4-type zinc-finger fold. The 96-residue stretch at 80–175 (SVICVVEDDK…KVTRLAQGLS (96 aa)) folds into the Toprim domain.

It belongs to the RecR family.

Its function is as follows. May play a role in DNA repair. It seems to be involved in an RecBC-independent recombinational process of DNA repair. It may act with RecF and RecO. This is Recombination protein RecR from Staphylococcus haemolyticus (strain JCSC1435).